A 283-amino-acid chain; its full sequence is Elongation factor Ts (283 aa).

The interval 80–83 is involved in Mg(2+) ion dislocation from EF-Tu; that stretch reads TDFV.

The protein belongs to the EF-Ts family.

It localises to the cytoplasm. Its function is as follows. Associates with the EF-Tu.GDP complex and induces the exchange of GDP to GTP. It remains bound to the aminoacyl-tRNA.EF-Tu.GTP complex up to the GTP hydrolysis stage on the ribosome. This is Elongation factor Ts from Actinobacillus succinogenes (strain ATCC 55618 / DSM 22257 / CCUG 43843 / 130Z).